Reading from the N-terminus, the 172-residue chain is Ribosome maturation factor RimM (172 aa).

One can recognise a PRC barrel domain in the interval 96-168 (DGEFYYHEII…RIDVTVLEGL (73 aa)).

Belongs to the RimM family. In terms of assembly, binds ribosomal protein uS19.

It is found in the cytoplasm. An accessory protein needed during the final step in the assembly of 30S ribosomal subunit, possibly for assembly of the head region. Essential for efficient processing of 16S rRNA. May be needed both before and after RbfA during the maturation of 16S rRNA. It has affinity for free ribosomal 30S subunits but not for 70S ribosomes. This Streptococcus mutans serotype c (strain ATCC 700610 / UA159) protein is Ribosome maturation factor RimM.